Reading from the N-terminus, the 66-residue chain is Beta-toxin Cbo3 (66 aa).

An LCN-type CS-alpha/beta domain is found at 1–66; the sequence is KEGYIVNYHD…VWPLPKKTCN (66 aa). Intrachain disulfides connect C12-C65, C16-C41, C25-C46, and C29-C48. At N66 the chain carries Asparagine amide.

The protein belongs to the long (4 C-C) scorpion toxin superfamily. Sodium channel inhibitor family. Beta subfamily. Expressed by the venom gland.

It is found in the secreted. Functionally, beta toxins bind voltage-independently at site-4 of sodium channels and shift the voltage of activation toward more negative potentials thereby affecting sodium channel activation and promoting spontaneous and repetitive firing. A mixture of Cbo2 and Cbo3 is weakly active on the human voltage-gated sodium channels Nav1.4/SCN4A and Nav1.6/SCN8A when tested at 200 nM. In vivo, is toxic to mice when intraperitoneally injected. The polypeptide is Beta-toxin Cbo3 (Centruroides bonito (Scorpion)).